The chain runs to 451 residues: Bifunctional protein GlmU (451 aa).

A pyrophosphorylase region spans residues 1 to 226; sequence MVAVAILAAG…YLEISGINDR (226 aa). UDP-N-acetyl-alpha-D-glucosamine-binding positions include 7-10, Lys21, Gln73, and 78-79; these read LAAG and GT. Asp103 provides a ligand contact to Mg(2+). The UDP-N-acetyl-alpha-D-glucosamine site is built by Gly140, Glu155, Asn170, and Asn224. Asn224 contacts Mg(2+). Residues 227–247 form a linker region; sequence KQLATAYDILQNRIKDYWMRA. Residues 248–451 are N-acetyltransferase; the sequence is GVTLIDPDSI…ISGWRMKTDD (204 aa). Residues Arg329 and Lys347 each contribute to the UDP-N-acetyl-alpha-D-glucosamine site. His359 acts as the Proton acceptor in catalysis. 2 residues coordinate UDP-N-acetyl-alpha-D-glucosamine: Tyr362 and Asn373. Residues Ala376, 382-383, Ala419, and Arg436 each bind acetyl-CoA; that span reads NY.

This sequence in the N-terminal section; belongs to the N-acetylglucosamine-1-phosphate uridyltransferase family. The protein in the C-terminal section; belongs to the transferase hexapeptide repeat family. As to quaternary structure, homotrimer. The cofactor is Mg(2+).

Its subcellular location is the cytoplasm. It catalyses the reaction alpha-D-glucosamine 1-phosphate + acetyl-CoA = N-acetyl-alpha-D-glucosamine 1-phosphate + CoA + H(+). The catalysed reaction is N-acetyl-alpha-D-glucosamine 1-phosphate + UTP + H(+) = UDP-N-acetyl-alpha-D-glucosamine + diphosphate. Its pathway is nucleotide-sugar biosynthesis; UDP-N-acetyl-alpha-D-glucosamine biosynthesis; N-acetyl-alpha-D-glucosamine 1-phosphate from alpha-D-glucosamine 6-phosphate (route II): step 2/2. The protein operates within nucleotide-sugar biosynthesis; UDP-N-acetyl-alpha-D-glucosamine biosynthesis; UDP-N-acetyl-alpha-D-glucosamine from N-acetyl-alpha-D-glucosamine 1-phosphate: step 1/1. It participates in bacterial outer membrane biogenesis; LPS lipid A biosynthesis. In terms of biological role, catalyzes the last two sequential reactions in the de novo biosynthetic pathway for UDP-N-acetylglucosamine (UDP-GlcNAc). The C-terminal domain catalyzes the transfer of acetyl group from acetyl coenzyme A to glucosamine-1-phosphate (GlcN-1-P) to produce N-acetylglucosamine-1-phosphate (GlcNAc-1-P), which is converted into UDP-GlcNAc by the transfer of uridine 5-monophosphate (from uridine 5-triphosphate), a reaction catalyzed by the N-terminal domain. In Gloeothece citriformis (strain PCC 7424) (Cyanothece sp. (strain PCC 7424)), this protein is Bifunctional protein GlmU.